The sequence spans 404 residues: MNQTLEEVVSLARQCGCGHRHYDIPIEQMVVGREAFARLVAYLRHKRYERVAIVADDHTFAAVERSLCDQLENGSIRYTVCLVQPDENGDVIADERSIVQVLLETPDDVDVLIAVGAGTIHDITRFSSYKMRIPFISVPTAPSVDGFTSMGAPLIIRGVKKTIQAQAPIAVFAHTGVLCQSPKEMIAAGFGDMVAKYTSLADWQFAHWMADEPYCPFVHQLTEQSLQTCVDHIDDIAAGGEQGIRVLMDALLQSGIAMLLMGQSYSASGAEHHLSHYWEMEFLRQKKRQVLHGAKVGVSTPIIIEHYQRVFWPLLNELEKRPKSMDEATWERLKANTASIRELLESLPSPERIRTMLAKVGGAIAPEQLGIDPQLVERSLREAHRLRLNRFTMLYFLNELIFVE.

NAD(+) is bound by residues Asp-56, Gly-118 to Asp-122, and Thr-140 to Ser-143. Asp-145 is a binding site for substrate. Ser-149 contacts NAD(+). Asp-192 lines the substrate pocket. Ni(2+) is bound by residues Asp-192 and His-272. His-276 provides a ligand contact to substrate. A Ni(2+)-binding site is contributed by His-292.

It belongs to the glycerol-1-phosphate dehydrogenase family. Homodimer. Ni(2+) serves as cofactor.

Its subcellular location is the cytoplasm. The catalysed reaction is sn-glycerol 1-phosphate + NAD(+) = dihydroxyacetone phosphate + NADH + H(+). It carries out the reaction sn-glycerol 1-phosphate + NADP(+) = dihydroxyacetone phosphate + NADPH + H(+). Catalyzes the NAD(P)H-dependent reduction of dihydroxyacetonephosphate (DHAP or glycerone phosphate) to glycerol 1-phosphate (G1P). The G1P thus generated is probably used for the synthesis of phosphoglycerolipids in Gram-positive bacterial species. This is Glycerol-1-phosphate dehydrogenase [NAD(P)+] from Geobacillus stearothermophilus (Bacillus stearothermophilus).